The primary structure comprises 432 residues: MGKSVVVLGAQWGDEGKGKIVDLLTDRVKYVVRYQGGHNAGHTLIINGEKTVLRLIPSGILHNNVTCLIGNGVVLSPSALMQEMGELESRGINVRERLLISEACPLIMPYHVAMDHAREAALGNNKIGTTGRGIGPAYEDKVARRGLRVSDLFNKEKFAAKLKNVLDYYNFQLVQYYKAEPVDYQKTLDDVMAIADIILGMVADISTILDTARKNGDNILFEGAQGAMLDIDHGTYPFVTSSNTTAGGVATGAGFGPRNIDYVLGIIKAYCTRVGGGPFTTELFDETGAEIARKGNEFGAVTGRPRRCGWFDAVAIRRAIQVNSISGFCMTKLDVLDGFDEVKICVGYKLPSGEVVDYAPLSAKDWEGVEPVYESMPGWKENTFGVTDYNKLPAAVHNYVKRIEQVTGVPVAILSTGPDRVETMILQDPFKQ.

Residues 13-19 (GDEGKGK) and 41-43 (GHT) contribute to the GTP site. Asp14 (proton acceptor) is an active-site residue. Asp14 and Gly41 together coordinate Mg(2+). Residues 14–17 (DEGK), 39–42 (NAGH), Thr130, Arg144, Gln225, Thr240, and Arg304 contribute to the IMP site. His42 functions as the Proton donor in the catalytic mechanism. Residue 300 to 306 (AVTGRPR) participates in substrate binding. GTP-binding positions include Arg306, 332-334 (KLD), and 415-417 (STG).

Belongs to the adenylosuccinate synthetase family. In terms of assembly, homodimer. It depends on Mg(2+) as a cofactor.

Its subcellular location is the cytoplasm. It carries out the reaction IMP + L-aspartate + GTP = N(6)-(1,2-dicarboxyethyl)-AMP + GDP + phosphate + 2 H(+). The protein operates within purine metabolism; AMP biosynthesis via de novo pathway; AMP from IMP: step 1/2. Functionally, plays an important role in the de novo pathway of purine nucleotide biosynthesis. Catalyzes the first committed step in the biosynthesis of AMP from IMP. The polypeptide is Adenylosuccinate synthetase (Actinobacillus succinogenes (strain ATCC 55618 / DSM 22257 / CCUG 43843 / 130Z)).